The following is a 269-amino-acid chain: Triosephosphate isomerase (269 aa).

8 to 10 is a substrate binding site; the sequence is NWK. Residue His-105 is the Electrophile of the active site. Glu-183 (proton acceptor) is an active-site residue. Residues Gly-189, Ser-227, and 248-249 contribute to the substrate site; that span reads GG.

This sequence belongs to the triosephosphate isomerase family. As to quaternary structure, homodimer.

It localises to the cytoplasm. The enzyme catalyses D-glyceraldehyde 3-phosphate = dihydroxyacetone phosphate. Its pathway is carbohydrate biosynthesis; gluconeogenesis. It participates in carbohydrate degradation; glycolysis; D-glyceraldehyde 3-phosphate from glycerone phosphate: step 1/1. Its function is as follows. Involved in the gluconeogenesis. Catalyzes stereospecifically the conversion of dihydroxyacetone phosphate (DHAP) to D-glyceraldehyde-3-phosphate (G3P). This chain is Triosephosphate isomerase, found in Psychrobacter arcticus (strain DSM 17307 / VKM B-2377 / 273-4).